We begin with the raw amino-acid sequence, 151 residues long: D-ribose pyranase 1 (151 aa).

Residue His-20 is the Proton donor of the active site. Residues Asp-28, His-98, and Trp-121–Asn-123 contribute to the substrate site.

This sequence belongs to the RbsD / FucU family. RbsD subfamily. In terms of assembly, homodecamer.

It is found in the cytoplasm. The catalysed reaction is beta-D-ribopyranose = beta-D-ribofuranose. The protein operates within carbohydrate metabolism; D-ribose degradation; D-ribose 5-phosphate from beta-D-ribopyranose: step 1/2. Its function is as follows. Catalyzes the interconversion of beta-pyran and beta-furan forms of D-ribose. The protein is D-ribose pyranase 1 of Streptomyces griseus subsp. griseus (strain JCM 4626 / CBS 651.72 / NBRC 13350 / KCC S-0626 / ISP 5235).